The following is a 133-amino-acid chain: uncharacterized protein (133 aa).

This is an uncharacterized protein from Homo sapiens (Human).